The following is a 661-amino-acid chain: DnaJ protein ERDJ2B (661 aa).

The Lumenal portion of the chain corresponds to 1–8; that stretch reads MAESEENS. Residues 9-29 form a helical membrane-spanning segment; the sequence is VLFPIFILTMMAIPLVPYTFV. The Cytoplasmic segment spans residues 30–65; sequence KLSRAFSKKQRSIHCQCLECDRSGKYKRSISQSISS. Residues 66-86 form a helical membrane-spanning segment; that stretch reads FTSCSNLTVVLLWIVMIFLIY. At 87 to 190 the chain is on the lumenal side; it reads HTKNMSRESQ…FILNMNGESG (104 aa). Residue asparagine 90 is glycosylated (N-linked (GlcNAc...) asparagine). One can recognise a J domain in the interval 99–164; that stretch reads EPFGILGLEP…LSRENFEKYG (66 aa). The helical transmembrane segment at 191-211 threads the bilayer; the sequence is GILLLCTVGLCILLPLVIASI. The SEC63 domain occupies 206-597; that stretch reads LVIASIYLWR…IGCDQKTSLK (392 aa). Over 212 to 661 the chain is Cytoplasmic; that stretch reads YLWRSSKYTG…SSEESGSDEE (450 aa). Residues 608-661 are disordered; it reads EGENAEEGLEEEDDEIEEEDYESEYSEDEEDKKRGSKKKVNKESSSEESGSDEE. Over residues 609 to 637 the composition is skewed to acidic residues; the sequence is GENAEEGLEEEDDEIEEEDYESEYSEDEE.

As to quaternary structure, interacts with OEP61/TPR7. As to expression, expressed in leaves, flower buds and flowers.

It localises to the endoplasmic reticulum membrane. Required for integral membrane and secreted preprotein translocation across the endoplasmic reticulum membrane. The polypeptide is DnaJ protein ERDJ2B (ERDJ2B) (Arabidopsis thaliana (Mouse-ear cress)).